Consider the following 229-residue polypeptide: MDSKGSAQKGSRLLLLLVVSNLLLCQGVVSTPVCPNGPGNCQVSLRDLFDRAVMVSHYIHNLSSEMFNEFDKRYAQGKGYITMALNSCHTSSLPTPEDKEQAQQTHHEVLMSLILGLLRSWNDPLYHLVTEVRGMKGVPDAILSRAIEIEEENKRLLEGMEMILGQVIPGAKETEPYPVWSGLPSLQTKDEEARHSAFYNLLHCLRRDSSKIDTYLKLLNCRIIYNNNC.

The first 30 residues, 1 to 30, serve as a signal peptide directing secretion; that stretch reads MDSKGSAQKGSRLLLLLVVSNLLLCQGVVS. A disulfide bond links cysteine 34 and cysteine 41. A phosphoserine mark is found at serine 56, serine 64, and serine 120. 2 disulfide bridges follow: cysteine 88-cysteine 204 and cysteine 221-cysteine 229.

Belongs to the somatotropin/prolactin family. In terms of assembly, interacts with PRLR.

It localises to the secreted. Functionally, prolactin acts primarily on the mammary gland by promoting lactation. The sequence is that of Prolactin (PRL) from Capra hircus (Goat).